The chain runs to 64 residues: MNLNVVNRELKVGQIKMNGVSSSALFLIGDANLLILSSILDTPFETVTEGPFVPLVTDVPPTPG.

Its function is as follows. Required for the formation of functionally normal spores. Could be involved in the establishment of normal spore coat structure and/or permeability, which allows the access of germinants to their receptor. This is Probable spore germination protein GerPD (gerPD) from Bacillus cereus.